The sequence spans 132 residues: ATP synthase epsilon chain (132 aa).

Belongs to the ATPase epsilon chain family. F-type ATPases have 2 components, CF(1) - the catalytic core - and CF(0) - the membrane proton channel. CF(1) has five subunits: alpha(3), beta(3), gamma(1), delta(1), epsilon(1). CF(0) has three main subunits: a, b and c.

The protein localises to the cell membrane. Its function is as follows. Produces ATP from ADP in the presence of a proton gradient across the membrane. This Desulforamulus reducens (strain ATCC BAA-1160 / DSM 100696 / MI-1) (Desulfotomaculum reducens) protein is ATP synthase epsilon chain.